A 338-amino-acid polypeptide reads, in one-letter code: Ketol-acid reductoisomerase (NADP(+)) (338 aa).

Residues 1–181 enclose the KARI N-terminal Rossmann domain; the sequence is MKVFYDKDCD…GGGKAGIIET (181 aa). Residues 24-27, R47, and S52 contribute to the NADP(+) site; that span reads YGSQ. H107 is an active-site residue. G133 contacts NADP(+). The region spanning 182-327 is the KARI C-terminal knotted domain; that stretch reads NFKEETETDL…AQLRAMMPWI (146 aa). Positions 190, 194, 226, and 230 each coordinate Mg(2+). Residue S251 coordinates substrate.

It belongs to the ketol-acid reductoisomerase family. The cofactor is Mg(2+).

The enzyme catalyses (2R)-2,3-dihydroxy-3-methylbutanoate + NADP(+) = (2S)-2-acetolactate + NADPH + H(+). It carries out the reaction (2R,3R)-2,3-dihydroxy-3-methylpentanoate + NADP(+) = (S)-2-ethyl-2-hydroxy-3-oxobutanoate + NADPH + H(+). It functions in the pathway amino-acid biosynthesis; L-isoleucine biosynthesis; L-isoleucine from 2-oxobutanoate: step 2/4. The protein operates within amino-acid biosynthesis; L-valine biosynthesis; L-valine from pyruvate: step 2/4. Involved in the biosynthesis of branched-chain amino acids (BCAA). Catalyzes an alkyl-migration followed by a ketol-acid reduction of (S)-2-acetolactate (S2AL) to yield (R)-2,3-dihydroxy-isovalerate. In the isomerase reaction, S2AL is rearranged via a Mg-dependent methyl migration to produce 3-hydroxy-3-methyl-2-ketobutyrate (HMKB). In the reductase reaction, this 2-ketoacid undergoes a metal-dependent reduction by NADPH to yield (R)-2,3-dihydroxy-isovalerate. This chain is Ketol-acid reductoisomerase (NADP(+)), found in Paracidovorax citrulli (strain AAC00-1) (Acidovorax citrulli).